We begin with the raw amino-acid sequence, 106 residues long: Iron-sulfur cluster assembly protein CyaY (106 aa).

It belongs to the frataxin family.

Its function is as follows. Involved in iron-sulfur (Fe-S) cluster assembly. May act as a regulator of Fe-S biogenesis. The chain is Iron-sulfur cluster assembly protein CyaY from Yersinia pseudotuberculosis serotype O:3 (strain YPIII).